Reading from the N-terminus, the 217-residue chain is Thymidylate kinase (217 aa).

12–19 (GIDGSGKS) provides a ligand contact to ATP.

The protein belongs to the thymidylate kinase family.

It catalyses the reaction dTMP + ATP = dTDP + ADP. Phosphorylation of dTMP to form dTDP in both de novo and salvage pathways of dTTP synthesis. The protein is Thymidylate kinase of Cereibacter sphaeroides (strain ATCC 17023 / DSM 158 / JCM 6121 / CCUG 31486 / LMG 2827 / NBRC 12203 / NCIMB 8253 / ATH 2.4.1.) (Rhodobacter sphaeroides).